The following is an 892-amino-acid chain: Microsomal triglyceride transfer protein homolog (892 aa).

A signal peptide spans 1–19 (MFSSRIWLLLAVTVGVCLA).

As to quaternary structure, heterodimer; heterodimerizes with protein disulfide isomerase.

Its subcellular location is the endoplasmic reticulum. Catalyzes the transport of cholesteryl ester, and phospholipid between phospholipid surfaces. Does not catalyze transport of triglycerides. Required for the assembly and secretion of plasma lipoproteins that contain apolipoprotein B. Required for normal expression of klf-3. In Caenorhabditis elegans, this protein is Microsomal triglyceride transfer protein homolog.